Here is a 448-residue protein sequence, read N- to C-terminus: N-succinylarginine dihydrolase (448 aa).

Substrate contacts are provided by residues 19–28 (GGLSYGNVAS), Asn110, and 137–138 (HR). Glu174 is a catalytic residue. Arg214 lines the substrate pocket. His250 is an active-site residue. Substrate is bound by residues Asp252 and Asn365. The Nucleophile role is filled by Cys371.

The protein belongs to the succinylarginine dihydrolase family. As to quaternary structure, homodimer.

It catalyses the reaction N(2)-succinyl-L-arginine + 2 H2O + 2 H(+) = N(2)-succinyl-L-ornithine + 2 NH4(+) + CO2. Its pathway is amino-acid degradation; L-arginine degradation via AST pathway; L-glutamate and succinate from L-arginine: step 2/5. Functionally, catalyzes the hydrolysis of N(2)-succinylarginine into N(2)-succinylornithine, ammonia and CO(2). The polypeptide is N-succinylarginine dihydrolase (Ectopseudomonas mendocina (strain ymp) (Pseudomonas mendocina)).